A 250-amino-acid chain; its full sequence is HTH-type transcriptional regulator KipR (250 aa).

Residues 5-65 enclose the HTH iclR-type domain; the sequence is NKTVVKSMAL…DASGAYSLGL (61 aa). A DNA-binding region (H-T-H motif) is located at residues 26-45; that stretch reads LSELVSLTGMPKTSVHRMVS. Residues 80–249 form the IclR-ED domain; the sequence is IRKIAKPVME…ALQISRKIGY (170 aa).

Functionally, transcriptional repressor of the kip gene-containing operon. The chain is HTH-type transcriptional regulator KipR (kipR) from Bacillus subtilis (strain 168).